We begin with the raw amino-acid sequence, 281 residues long: NADPH-dependent 7-cyano-7-deazaguanine reductase (281 aa).

87 to 89 contacts substrate; sequence IES. 89–90 contributes to the NADPH binding site; that stretch reads SK. The active-site Thioimide intermediate is the Cys188. The Proton donor role is filled by Asp195. 227 to 228 is a binding site for substrate; it reads HE. 256–257 is an NADPH binding site; the sequence is RG. The tract at residues 261–281 is disordered; that stretch reads INPYRSTEQAKPDHNHRMARQ. Basic and acidic residues predominate over residues 268–281; the sequence is EQAKPDHNHRMARQ.

This sequence belongs to the GTP cyclohydrolase I family. QueF type 2 subfamily. Homodimer.

The protein resides in the cytoplasm. The enzyme catalyses 7-aminomethyl-7-carbaguanine + 2 NADP(+) = 7-cyano-7-deazaguanine + 2 NADPH + 3 H(+). It participates in tRNA modification; tRNA-queuosine biosynthesis. Catalyzes the NADPH-dependent reduction of 7-cyano-7-deazaguanine (preQ0) to 7-aminomethyl-7-deazaguanine (preQ1). This chain is NADPH-dependent 7-cyano-7-deazaguanine reductase, found in Vibrio vulnificus (strain YJ016).